Here is a 153-residue protein sequence, read N- to C-terminus: Histone H2B.10 (153 aa).

2 stretches are compositionally biased toward basic and acidic residues: residues 1-28 (MAPKAEKKPAAKKPAEEEPAAEKAEKAL) and 36-53 (EKRLPAGKAEKSSGEGKK). Residues 1-61 (MAPKAEKKPA…KKAGRKKAKK (61 aa)) form a disordered region. 2 positions are modified to N6-acetyllysine: lysine 7 and lysine 37. Lysine 149 participates in a covalent cross-link: Glycyl lysine isopeptide (Lys-Gly) (interchain with G-Cter in ubiquitin).

The protein belongs to the histone H2B family. The nucleosome is a histone octamer containing two molecules each of H2A, H2B, H3 and H4 assembled in one H3-H4 heterotetramer and two H2A-H2B heterodimers. The octamer wraps approximately 147 bp of DNA. Can be acetylated to form H2BK6ac and H2BK33ac. In terms of processing, monoubiquitinated by BRE1 to form H2BK143ub1 and deubiquitinated by UBP26. Required for heterochromatic histone H3 di- and trimethylation at H3K4me. May give a specific tag for epigenetic transcriptional activation.

It is found in the nucleus. It localises to the chromosome. Its function is as follows. Core component of nucleosome. Nucleosomes wrap and compact DNA into chromatin, limiting DNA accessibility to the cellular machineries which require DNA as a template. Histones thereby play a central role in transcription regulation, DNA repair, DNA replication and chromosomal stability. DNA accessibility is regulated via a complex set of post-translational modifications of histones, also called histone code, and nucleosome remodeling. In Oryza sativa subsp. japonica (Rice), this protein is Histone H2B.10 (H2B.10).